The sequence spans 446 residues: 3-phosphoshikimate 1-carboxyvinyltransferase (446 aa).

The segment at 1 to 20 (MSTWPAPSTATPVHATVTVP) is disordered. 3-phosphoshikimate-binding residues include Lys-23, Ser-24, and Arg-28. Lys-23 lines the phosphoenolpyruvate pocket. Phosphoenolpyruvate-binding residues include Gly-100 and Arg-128. Residues Ser-171, Ser-172, Gln-173, Ser-200, Glu-315, and His-344 each coordinate 3-phosphoshikimate. Gln-173 serves as a coordination point for phosphoenolpyruvate. Glu-315 functions as the Proton acceptor in the catalytic mechanism. Phosphoenolpyruvate contacts are provided by Arg-348, Arg-389, and Lys-414.

Belongs to the EPSP synthase family. In terms of assembly, monomer.

It localises to the cytoplasm. It carries out the reaction 3-phosphoshikimate + phosphoenolpyruvate = 5-O-(1-carboxyvinyl)-3-phosphoshikimate + phosphate. Its pathway is metabolic intermediate biosynthesis; chorismate biosynthesis; chorismate from D-erythrose 4-phosphate and phosphoenolpyruvate: step 6/7. In terms of biological role, catalyzes the transfer of the enolpyruvyl moiety of phosphoenolpyruvate (PEP) to the 5-hydroxyl of shikimate-3-phosphate (S3P) to produce enolpyruvyl shikimate-3-phosphate and inorganic phosphate. This is 3-phosphoshikimate 1-carboxyvinyltransferase from Mycolicibacterium vanbaalenii (strain DSM 7251 / JCM 13017 / BCRC 16820 / KCTC 9966 / NRRL B-24157 / PYR-1) (Mycobacterium vanbaalenii).